The primary structure comprises 72 residues: Conotoxin LiC53 (72 aa).

The first 23 residues, 1–23 (MEKLTSLLLVAALLMLTQTLIQG), serve as a signal peptide directing secretion. Residues 24 to 41 (GGEDRPNKKFLQKIKSTA) constitute a propeptide that is removed on maturation. Cystine bridges form between C45/C59, C52/C63, and C58/C68.

Belongs to the conotoxin O2 superfamily. In terms of tissue distribution, expressed by the venom duct.

Its subcellular location is the secreted. In Conus lividus (Livid cone), this protein is Conotoxin LiC53.